A 98-amino-acid polypeptide reads, in one-letter code: Small ribosomal subunit protein bS20 (98 aa).

Belongs to the bacterial ribosomal protein bS20 family.

In terms of biological role, binds directly to 16S ribosomal RNA. This is Small ribosomal subunit protein bS20 from Synechococcus elongatus (strain ATCC 33912 / PCC 7942 / FACHB-805) (Anacystis nidulans R2).